The following is a 579-amino-acid chain: Zinc finger protein 384 (579 aa).

The disordered stretch occupies residues 171–198; that stretch reads TLTEEGGGGGGGGGTVAPPKPPRGRKKK. The span at 175–185 shows a compositional bias: gly residues; sequence EGGGGGGGGGT. 8 C2H2-type zinc fingers span residues 229 to 251, 257 to 279, 285 to 307, 318 to 340, 346 to 368, 374 to 398, 404 to 426, and 434 to 456; these read YRCR…SKSH, HKCP…IRIH, YSCN…TRIH, HKCP…LRIH, YNCS…TRIH, YKCA…RRQH, FKCH…LSTH, and YTCT…MRKH. Residues 500–513 are compositionally biased toward low complexity; sequence QAQASQASQQQQQQ. The interval 500 to 553 is disordered; the sequence is QAQASQASQQQQQQQPPPPQPPHFQSPGAAPQGGGGGDSNQNPPPQCSFDLTPY. Residues 514–523 show a composition bias toward pro residues; the sequence is QPPPPQPPHF.

Belongs to the krueppel C2H2-type zinc-finger protein family. Interacts with BCAR1. As to expression, expressed in osteocytes, osteoblasts, and chondrocytes in bone.

Its subcellular location is the nucleus. Transcription factor that binds the consensus DNA sequence [GC]AAAAA. Seems to bind and regulate the promoters of MMP1, MMP3, MMP7 and COL1A1. This chain is Zinc finger protein 384 (Znf384), found in Rattus norvegicus (Rat).